The following is a 503-amino-acid chain: Maturase K (503 aa).

Belongs to the intron maturase 2 family. MatK subfamily.

It localises to the plastid. Its subcellular location is the chloroplast. Functionally, usually encoded in the trnK tRNA gene intron. Probably assists in splicing its own and other chloroplast group II introns. The polypeptide is Maturase K (Liquidambar formosana (Formosan gum)).